A 1409-amino-acid polypeptide reads, in one-letter code: Adhesion and penetration protein autotransporter (1409 aa).

A signal peptide spans 1-25 (MKKTVFRLNFLTACVSLGIASQAWA). The Peptidase S6 domain occupies 26-294 (GHTYFGIDYQ…LIREEWFYNE (269 aa)). Ser250 is an active-site residue. 2 disordered regions span residues 866–888 (YSASSNNAPRHRRSLETETTPTS) and 1016–1078 (AKQV…SKRA). Residues 1057–1067 (VEQTTETQTSK) show a composition bias toward polar residues. Over residues 1068-1077 (PKTKKGRSKR) the composition is skewed to basic residues. The region spanning 1156-1409 (VDQAQSALWT…NVGVKLGYRW (254 aa)) is the Autotransporter domain.

The protein localises to the periplasm. It is found in the secreted. Its subcellular location is the cell surface. It localises to the cell outer membrane. Probable protease; promotes adherence and invasion by directly binding to a host cell structure. The sequence is that of Adhesion and penetration protein autotransporter (hap) from Haemophilus influenzae (strain ATCC 51907 / DSM 11121 / KW20 / Rd).